The primary structure comprises 150 residues: Transcription antitermination protein NusB (150 aa).

It belongs to the NusB family.

Involved in transcription antitermination. Required for transcription of ribosomal RNA (rRNA) genes. Binds specifically to the boxA antiterminator sequence of the ribosomal RNA (rrn) operons. The chain is Transcription antitermination protein NusB from Saccharophagus degradans (strain 2-40 / ATCC 43961 / DSM 17024).